A 142-amino-acid chain; its full sequence is Large ribosomal subunit protein uL11 (142 aa).

This sequence belongs to the universal ribosomal protein uL11 family. Part of the ribosomal stalk of the 50S ribosomal subunit. Interacts with L10 and the large rRNA to form the base of the stalk. L10 forms an elongated spine to which L12 dimers bind in a sequential fashion forming a multimeric L10(L12)X complex. One or more lysine residues are methylated.

Its function is as follows. Forms part of the ribosomal stalk which helps the ribosome interact with GTP-bound translation factors. The protein is Large ribosomal subunit protein uL11 of Vesicomyosocius okutanii subsp. Calyptogena okutanii (strain HA).